The following is a 199-amino-acid chain: Probable cobalt-precorrin-6B C(15)-methyltransferase (decarboxylating) (199 aa).

Residues Thr24, 48-52 (GCGTG), Asp72, and Ala101 contribute to the S-adenosyl-L-methionine site.

The protein belongs to the methyltransferase superfamily. Archaeal-type CbiT family.

It catalyses the reaction Co-precorrin-6B + S-adenosyl-L-methionine = Co-precorrin-7 + S-adenosyl-L-homocysteine + CO2. Its pathway is cofactor biosynthesis; adenosylcobalamin biosynthesis; cob(II)yrinate a,c-diamide from sirohydrochlorin (anaerobic route): step 8/10. Functionally, catalyzes the methylation of C-15 in cobalt-precorrin-6B followed by the decarboxylation of C-12 to form cobalt-precorrin-7. This chain is Probable cobalt-precorrin-6B C(15)-methyltransferase (decarboxylating), found in Saccharolobus islandicus (strain Y.N.15.51 / Yellowstone #2) (Sulfolobus islandicus).